An 847-amino-acid polypeptide reads, in one-letter code: Leucine--tRNA ligase (847 aa).

The short motif at 41–51 (PYPSGRIHMGH) is the 'HIGH' region element. Positions 619–623 (KMSKS) match the 'KMSKS' region motif. Lys-622 is a binding site for ATP.

This sequence belongs to the class-I aminoacyl-tRNA synthetase family.

It is found in the cytoplasm. The enzyme catalyses tRNA(Leu) + L-leucine + ATP = L-leucyl-tRNA(Leu) + AMP + diphosphate. This Cereibacter sphaeroides (strain ATCC 17023 / DSM 158 / JCM 6121 / CCUG 31486 / LMG 2827 / NBRC 12203 / NCIMB 8253 / ATH 2.4.1.) (Rhodobacter sphaeroides) protein is Leucine--tRNA ligase.